Consider the following 70-residue polypeptide: Beta-defensin 107 (70 aa).

Residues 1 to 26 (MPGAMKIFVFILAALILLAQIFQART) form the signal peptide. Cystine bridges form between cysteine 41-cysteine 55 and cysteine 45-cysteine 64.

It belongs to the beta-defensin family. As to expression, specifically expressed in testis.

It is found in the secreted. Its function is as follows. Has antibacterial activity. The protein is Beta-defensin 107 (DEFB107A) of Homo sapiens (Human).